The primary structure comprises 314 residues: PDCD10 and GCKIII kinases-associated protein 1 (314 aa).

Position 30 is a phosphoserine (Ser30). Residues 36-142 (DDTDKLKGKW…TQPFLEGGGT (107 aa)) form a disordered region. Position 106 is a phosphothreonine (Thr106). Positions 107 to 116 (PQPTGNSSPT) are enriched in polar residues. Phosphoserine occurs at positions 238 and 241. Positions 267–291 (VDSGNRQEDTHGSDGDGDGEIVDED) are disordered. Positions 271-280 (NRQEDTHGSD) are enriched in basic and acidic residues. Residues 281-291 (GDGDGEIVDED) show a composition bias toward acidic residues.

As to quaternary structure, interacts with KEAP1; this interaction prevents the ubiquitination of KEAP1 by TRIM25, thus protecting KEAP1 from degradation. Found in association with PDCD10 and members of the STE20 kinases, such as STK24, STK25 and STK26.

The protein resides in the cell membrane. Functionally, acts as a tumor suppressor. Acts as a tumor suppressor for colorectal cancer cell proliferation by targeting KEAP1/USP17/ELK1/CDK6 axis. This Homo sapiens (Human) protein is PDCD10 and GCKIII kinases-associated protein 1.